A 316-amino-acid chain; its full sequence is ATP synthase gamma chain (316 aa).

This sequence belongs to the ATPase gamma chain family. As to quaternary structure, F-type ATPases have 2 components, CF(1) - the catalytic core - and CF(0) - the membrane proton channel. CF(1) has five subunits: alpha(3), beta(3), gamma(1), delta(1), epsilon(1). CF(0) has three main subunits: a, b and c.

It localises to the cellular thylakoid membrane. In terms of biological role, produces ATP from ADP in the presence of a proton gradient across the membrane. The gamma chain is believed to be important in regulating ATPase activity and the flow of protons through the CF(0) complex. The sequence is that of ATP synthase gamma chain from Synechococcus elongatus (strain ATCC 33912 / PCC 7942 / FACHB-805) (Anacystis nidulans R2).